The chain runs to 576 residues: MSFELTRRQYADLYGPTTGDSIRLADTELFLEIEKDLTVYGEEVVFGGGKVIRDGMGQNGQVTRDEDVPDTVITNAVILDYTGIYKADVAIRDGHIIKIGKAGNPQITDGVDIVIGASTEIIAGERKILTAGGVDTHIHFISPDQVPTALTSGVTTMVGGGTGPAEGTKATTVTPGKWHIQRMLQATEGMPINIGLFGKGHASAVEPLAEQIRAGAIGLKVHEDWGSTTSSIDNSLKVADEYDVQVAIHTDTLNECGFVEDTIRAIGGRVIHTFHTEGAGGGHAPDIIKIAGLPNVLPASTNPTLPYTRNTIEEHLDMLMVCHHLNPDIPEDVAFADSRIRAETIAAEDVLQDLGIFAITSSDSQAMGRVGEVITRTWQVADKMKKQRGVLKDPAGGAHGSEDSDNFRLKRYVAKYTINAAIAQGMADSIGSVEEGKFADLVLWDPAFFGVKPELVLKGGQIAYALMGDANASIPTPQPRTMRPMFAAFGKAVQQSSITFLSQAAIDAGVPEELGLQKVIRAVSGIRSLSKADLKYNDATPDIQVDPETYKVTVDGEDVTCEPADVLPMAQRYFLF.

Positions 132-576 (GGVDTHIHFI…LPMAQRYFLF (445 aa)) constitute a Urease domain. 3 residues coordinate Ni(2+): histidine 137, histidine 139, and lysine 220. Lysine 220 is modified (N6-carboxylysine). Histidine 222 is a substrate binding site. Ni(2+)-binding residues include histidine 249 and histidine 275. The active-site Proton donor is the histidine 323. Aspartate 363 provides a ligand contact to Ni(2+).

It belongs to the metallo-dependent hydrolases superfamily. Urease alpha subunit family. Heterotrimer of UreA (gamma), UreB (beta) and UreC (alpha) subunits. Three heterotrimers associate to form the active enzyme. Ni cation is required as a cofactor. In terms of processing, carboxylation allows a single lysine to coordinate two nickel ions.

It localises to the cytoplasm. The catalysed reaction is urea + 2 H2O + H(+) = hydrogencarbonate + 2 NH4(+). The protein operates within nitrogen metabolism; urea degradation; CO(2) and NH(3) from urea (urease route): step 1/1. The sequence is that of Urease subunit alpha from Arthrobacter sp. (strain FB24).